The chain runs to 130 residues: Small ribosomal subunit protein uS12c (130 aa).

The protein belongs to the universal ribosomal protein uS12 family. Part of the 30S ribosomal subunit.

Its subcellular location is the plastid. It is found in the chloroplast. With S4 and S5 plays an important role in translational accuracy. Located at the interface of the 30S and 50S subunits. This chain is Small ribosomal subunit protein uS12c (rps12), found in Tetradesmus obliquus (Green alga).